Reading from the N-terminus, the 158-residue chain is Mitotic-spindle organizing protein 2 (158 aa).

The residue at position 34 (S34) is a Phosphoserine. The disordered stretch occupies residues 81–158; sequence AGQRVASDSQ…PGRSPPRSGT (78 aa). The span at 110 to 119 shows a compositional bias: gly residues; sequence KGGGALGGGP. S152 is subject to Phosphoserine.

It belongs to the MOZART2 family. As to quaternary structure, associates with the gamma-tubulin ring complex (gTuRC) consisting of TUBGCP2, TUBGCP3, TUBGCP4, TUBGCP5 and TUBGCP6 and gamma-tubulin TUBG1 or TUBG2; within the complex, interacts with TUBGCP2; the interaction plays a role in gTuRC activation.

It is found in the cytoplasm. The protein localises to the cytoskeleton. Its subcellular location is the microtubule organizing center. It localises to the centrosome. The protein resides in the spindle. Required for the recruitment and the assembly of the gamma-tubulin ring complex (gTuRC) at the centrosome. The gTuRC regulates the minus-end nucleation of alpha-beta tubulin heterodimers that grow into microtubule protafilaments, a critical step in centrosome duplication and spindle formation. The polypeptide is Mitotic-spindle organizing protein 2 (MZT2) (Bos taurus (Bovine)).